Here is a 278-residue protein sequence, read N- to C-terminus: Acyl-[acyl-carrier-protein]--UDP-N-acetylglucosamine O-acyltransferase (278 aa).

Belongs to the transferase hexapeptide repeat family. LpxA subfamily. As to quaternary structure, homotrimer.

The protein localises to the cytoplasm. The catalysed reaction is a (3R)-hydroxyacyl-[ACP] + UDP-N-acetyl-alpha-D-glucosamine = a UDP-3-O-[(3R)-3-hydroxyacyl]-N-acetyl-alpha-D-glucosamine + holo-[ACP]. It participates in glycolipid biosynthesis; lipid IV(A) biosynthesis; lipid IV(A) from (3R)-3-hydroxytetradecanoyl-[acyl-carrier-protein] and UDP-N-acetyl-alpha-D-glucosamine: step 1/6. Its function is as follows. Involved in the biosynthesis of lipid A, a phosphorylated glycolipid that anchors the lipopolysaccharide to the outer membrane of the cell. The polypeptide is Acyl-[acyl-carrier-protein]--UDP-N-acetylglucosamine O-acyltransferase (Brucella abortus (strain S19)).